The primary structure comprises 432 residues: Probable exopolygalacturonase X (432 aa).

A signal peptide spans 1–23 (MKFSYSFVQVVSLLLSLSPSVEG). N-linked (GlcNAc...) asparagine glycans are attached at residues Asn-113, Asn-129, and Asn-199. A PbH1 1 repeat occupies 231-252 (SDNIVIQNSVINNGDDCVSFKP). Asp-245 functions as the Proton donor in the catalytic mechanism. Cys-247 and Cys-264 are oxidised to a cystine. Residues Asn-253 and Asn-265 are each glycosylated (N-linked (GlcNAc...) asparagine). PbH1 repeat units lie at residues 254-274 (STNI…SVGS), 285-306 (VQNV…RIKV), and 327-348 (VKNI…EVTQ). Residue His-268 is part of the active site. N-linked (GlcNAc...) asparagine glycans are attached at residues Asn-292, Asn-297, Asn-329, Asn-354, and Asn-364. One copy of the PbH1 5 repeat lies at 362-394 (PSNLTISDIHFKNFRGTTSGKRDPDVGTIVCSS). Cys-392 and Cys-398 are disulfide-bonded.

The protein belongs to the glycosyl hydrolase 28 family.

Its subcellular location is the secreted. The catalysed reaction is [(1-&gt;4)-alpha-D-galacturonosyl](n) + H2O = alpha-D-galacturonate + [(1-&gt;4)-alpha-D-galacturonosyl](n-1). Its function is as follows. Specific in hydrolyzing the terminal glycosidic bond of polygalacturonic acid and oligogalacturonates. This Neosartorya fischeri (strain ATCC 1020 / DSM 3700 / CBS 544.65 / FGSC A1164 / JCM 1740 / NRRL 181 / WB 181) (Aspergillus fischerianus) protein is Probable exopolygalacturonase X (pgaX).